The chain runs to 301 residues: Very-long-chain aldehyde decarbonylase GL1-10 (301 aa).

The next 3 membrane-spanning stretches (helical) occupy residues 36–56 (VLFW…PLPV), 94–114 (FFLV…MVGI), and 187–207 (SFVG…WIVL). Residues 131 to 265 (LVYFLVEDYL…FTYCDYLYGT (135 aa)) form the Fatty acid hydroxylase domain.

The protein belongs to the sterol desaturase family. In terms of assembly, homodimer. In terms of tissue distribution, expressed ubiquitously.

The protein resides in the endoplasmic reticulum membrane. It catalyses the reaction a long-chain fatty aldehyde + 2 NADPH + O2 + H(+) = a long-chain alkane + formate + 2 NADP(+) + H2O. In terms of biological role, aldehyde decarbonylase involved in the conversion of aldehydes to alkanes. Core component of a very-long-chain alkane synthesis complex. In Oryza sativa subsp. japonica (Rice), this protein is Very-long-chain aldehyde decarbonylase GL1-10.